The primary structure comprises 914 residues: Golgin candidate 6 (914 aa).

Coiled coils occupy residues 723–837 and 863–901; these read IEKQ…SLKG and EDELNDLLVCLGQEESKVEKLSAKLIELGVDVDKLLEDI. The residue at position 911 (Ser-911) is a Phosphoserine.

It is found in the golgi apparatus. The protein localises to the golgi stack. Its function is as follows. Golgi matrix protein playing a role in tethering of vesicles to Golgi membranes and in maintaining the overall structure of the Golgi apparatus. Functions in the anterograde transport of storage protein precursors from the endoplasmic reticulum (ER) to the Golgi complex. This is Golgin candidate 6 (GC6) from Arabidopsis thaliana (Mouse-ear cress).